A 223-amino-acid chain; its full sequence is 7-cyano-7-deazaguanine synthase (223 aa).

8 to 18 serves as a coordination point for ATP; that stretch reads MSGGMDSTLCA. Zn(2+)-binding residues include Cys-187, Cys-195, Cys-198, and Cys-201.

It belongs to the QueC family. It depends on Zn(2+) as a cofactor.

It carries out the reaction 7-carboxy-7-deazaguanine + NH4(+) + ATP = 7-cyano-7-deazaguanine + ADP + phosphate + H2O + H(+). Its pathway is purine metabolism; 7-cyano-7-deazaguanine biosynthesis. Functionally, catalyzes the ATP-dependent conversion of 7-carboxy-7-deazaguanine (CDG) to 7-cyano-7-deazaguanine (preQ(0)). This chain is 7-cyano-7-deazaguanine synthase, found in Campylobacter curvus (strain 525.92).